The following is a 197-amino-acid chain: ATP-dependent Clp protease proteolytic subunit 1 (197 aa).

Residue H126 is part of the active site.

This sequence belongs to the peptidase S14 family. In terms of assembly, fourteen ClpP subunits assemble into 2 heptameric rings which stack back to back to give a disk-like structure with a central cavity, resembling the structure of eukaryotic proteasomes.

The protein localises to the cytoplasm. The catalysed reaction is Hydrolysis of proteins to small peptides in the presence of ATP and magnesium. alpha-casein is the usual test substrate. In the absence of ATP, only oligopeptides shorter than five residues are hydrolyzed (such as succinyl-Leu-Tyr-|-NHMec, and Leu-Tyr-Leu-|-Tyr-Trp, in which cleavage of the -Tyr-|-Leu- and -Tyr-|-Trp bonds also occurs).. Its function is as follows. Cleaves peptides in various proteins in a process that requires ATP hydrolysis. Has a chymotrypsin-like activity. Plays a major role in the degradation of misfolded proteins. The protein is ATP-dependent Clp protease proteolytic subunit 1 of Nocardia farcinica (strain IFM 10152).